The primary structure comprises 150 residues: Flagellar assembly factor FliW (150 aa).

Belongs to the FliW family. In terms of assembly, interacts with translational regulator CsrA and flagellin(s).

The protein localises to the cytoplasm. Its function is as follows. Acts as an anti-CsrA protein, binds CsrA and prevents it from repressing translation of its target genes, one of which is flagellin. Binds to flagellin and participates in the assembly of the flagellum. This chain is Flagellar assembly factor FliW, found in Leptospira borgpetersenii serovar Hardjo-bovis (strain L550).